We begin with the raw amino-acid sequence, 232 residues long: U-scoloptoxin(11)-Ssd2a (232 aa).

The first 21 residues, 1-21, serve as a signal peptide directing secretion; the sequence is MFQFCLLILLLAPGRFFSALG. The propeptide occupies 22 to 32; it reads KPQETLTVENR.

In terms of processing, contains 8 disulfide bonds. Expressed by the venom gland.

The protein resides in the secreted. The sequence is that of U-scoloptoxin(11)-Ssd2a from Scolopendra dehaani (Thai centipede).